The following is a 406-amino-acid chain: CCA-adding enzyme (406 aa).

Positions 32 and 35 each coordinate ATP. Residues Gly32 and Arg35 each contribute to the CTP site. Mg(2+) contacts are provided by Asp45 and Asp47. ATP contacts are provided by Arg116, Asp159, Arg162, Arg165, and Arg168. Positions 116, 159, 162, 165, and 168 each coordinate CTP.

This sequence belongs to the tRNA nucleotidyltransferase/poly(A) polymerase family. Bacterial CCA-adding enzyme type 3 subfamily. Homodimer. Requires Mg(2+) as cofactor.

It catalyses the reaction a tRNA precursor + 2 CTP + ATP = a tRNA with a 3' CCA end + 3 diphosphate. The enzyme catalyses a tRNA with a 3' CCA end + 2 CTP + ATP = a tRNA with a 3' CCACCA end + 3 diphosphate. Its function is as follows. Catalyzes the addition and repair of the essential 3'-terminal CCA sequence in tRNAs without using a nucleic acid template. Adds these three nucleotides in the order of C, C, and A to the tRNA nucleotide-73, using CTP and ATP as substrates and producing inorganic pyrophosphate. tRNA 3'-terminal CCA addition is required both for tRNA processing and repair. Also involved in tRNA surveillance by mediating tandem CCA addition to generate a CCACCA at the 3' terminus of unstable tRNAs. While stable tRNAs receive only 3'-terminal CCA, unstable tRNAs are marked with CCACCA and rapidly degraded. The polypeptide is CCA-adding enzyme (Enterococcus faecalis (strain ATCC 700802 / V583)).